A 501-amino-acid chain; its full sequence is NAD(P)H-quinone oxidoreductase chain 4, chloroplastic (501 aa).

A run of 14 helical transmembrane segments spans residues Phe5 to Leu25, Thr38 to Leu58, Ile88 to Val108, Leu114 to Ser131, Leu135 to Met155, Phe168 to Leu188, Ala209 to Ile229, His243 to Ile263, Ala273 to Ala293, Ile306 to Asp326, Gly331 to Gly351, Leu387 to Thr407, Ile417 to Met437, and Phe464 to Phe484.

The protein belongs to the complex I subunit 4 family.

It is found in the plastid. The protein resides in the chloroplast thylakoid membrane. The enzyme catalyses a plastoquinone + NADH + (n+1) H(+)(in) = a plastoquinol + NAD(+) + n H(+)(out). It carries out the reaction a plastoquinone + NADPH + (n+1) H(+)(in) = a plastoquinol + NADP(+) + n H(+)(out). This Dioscorea elephantipes (Elephant's foot yam) protein is NAD(P)H-quinone oxidoreductase chain 4, chloroplastic.